A 389-amino-acid polypeptide reads, in one-letter code: Putative sugar efflux transporter DR_1322 (389 aa).

12 helical membrane passes run 10-30 (AVLL…LFAV), 34-54 (GMTP…AVLV), 69-89 (KPLV…LSGV), 96-116 (MATG…VFAF), 135-155 (VLRA…AAVL), 161-181 (SGVF…LLFI), 211-231 (GWVV…MVMF), 246-266 (VGFL…LFVL), 281-301 (LLLF…PLLI), 308-328 (AAVL…LMPG), 341-361 (SVVG…VFGY), and 363-383 (PVFL…LWAT).

This sequence belongs to the major facilitator superfamily. Set transporter family.

Its subcellular location is the cell membrane. Functionally, involved in the efflux of sugars. The physiological role may be the detoxification of non-metabolizable sugar analogs. This is Putative sugar efflux transporter DR_1322 from Deinococcus radiodurans (strain ATCC 13939 / DSM 20539 / JCM 16871 / CCUG 27074 / LMG 4051 / NBRC 15346 / NCIMB 9279 / VKM B-1422 / R1).